Here is a 396-residue protein sequence, read N- to C-terminus: MGPFCLGCSHRKCYSPIRNLISQETFKFHFKNLGYAKGRKDTFLCYEVTRKDCDSPVSLHHGVFKNKGNIHAEVCFLYWFHDKVLKVLSPREEFKITWYMSWSPCFECAEQIVRFLATHHYLSLDIFSSRLYNVQDPETQQNLCRLVQEGAQVAAMDLYEFKKCWKKFVTMVAGDSGLGKRLLTNFRYQDSKLQEILRRMDPLSEEEFYSQFYNQRVKHLCYYHRMKPYLCYQLEQFNGQAPLKGCLLSEKGKQHAEILFLDKIRSMELSQVTITCYLTWSPCPNCAWRLAAFKRDRPDLILHIYTSRLYFHWKRPFQKGLCSLWQSGILVDVMDLPQFTDCWTNFVNPKRPFWPWKGLEIISRRTQRRLRRIKESWGLQDLVNDFGNLQLGPPMS.

CMP/dCMP-type deaminase domains follow at residues Gly38–Ala154 and Glu205–Leu324. Zn(2+) is bound at residue His71. Glu73 (proton donor) is an active-site residue. Cys105, Cys108, His255, Cys283, and Cys286 together coordinate Zn(2+).

This sequence belongs to the cytidine and deoxycytidylate deaminase family. In terms of assembly, homodimer. It depends on Zn(2+) as a cofactor.

It is found in the cytoplasm. The catalysed reaction is a 2'-deoxycytidine in single-stranded DNA + H2O + H(+) = a 2'-deoxyuridine in single-stranded DNA + NH4(+). Its function is as follows. DNA deaminase (cytidine deaminase) which acts as an inhibitor of retrovirus replication and retrotransposon mobility via deaminase-dependent and -independent mechanisms. Selectively targets single-stranded DNA and does not deaminate double-stranded DNA or single- or double-stranded RNA. In Cricetulus longicaudatus (Long-tailed dwarf hamster), this protein is DNA dC-&gt;dU-editing enzyme APOBEC3 (APOBEC3).